The chain runs to 253 residues: Indole-3-glycerol phosphate synthase (253 aa).

It belongs to the TrpC family.

It carries out the reaction 1-(2-carboxyphenylamino)-1-deoxy-D-ribulose 5-phosphate + H(+) = (1S,2R)-1-C-(indol-3-yl)glycerol 3-phosphate + CO2 + H2O. It functions in the pathway amino-acid biosynthesis; L-tryptophan biosynthesis; L-tryptophan from chorismate: step 4/5. The sequence is that of Indole-3-glycerol phosphate synthase from Bacillus cereus (strain B4264).